Here is a 27-residue protein sequence, read N- to C-terminus: Secretin (27 aa).

Val27 bears the Valine amide mark.

It belongs to the glucagon family.

It is found in the secreted. In terms of biological role, hormone involved in different processes, such as regulation of the pH of the duodenal content, food intake and water homeostasis. Exerts its biological effects by binding to secretin receptor (SCTR), a G-protein coupled receptor expressed in the basolateral domain of several cells. Acts as a key gastrointestinal hormone by regulating the pH of the duodenal content. Secreted by S cells of the duodenum in the crypts of Lieberkuehn and regulates the pH of the duodenum by (1) inhibiting the secretion of gastric acid from the parietal cells of the stomach and (2) stimulating the production of bicarbonate (NaHCO(3)) from the ductal cells of the pancreas. Production of bicarbonate is essential to neutralize the pH and ensure no damage is done to the small intestine by the gastric acid. In addition to regulating the pH of the duodenal content, plays a central role in diet induced thermogenesis: acts as a non-sympathetic brown fat (BAT) activator mediating prandial thermogenesis, which consequentially induces satiation. Mechanistically, secretin released by the gut after a meal binds to secretin receptor (SCTR) in brown adipocytes, activating brown fat thermogenesis by stimulating lipolysis, which is sensed in the brain and promotes satiation. Also able to stimulate lipolysis in white adipocytes. Also plays an important role in cellular osmoregulation: released into the systemic circulation in response to hyperosmolality and acts at different levels in the hypothalamus, pituitary and kidney to regulate water homeostasis. Also plays a role in the central nervous system, possibly by acting as a neuropeptide hormone: required for hippocampal synaptic function and neural progenitor cells maintenance. This is Secretin from Bos taurus (Bovine).